The primary structure comprises 488 residues: ATP synthase subunit beta (488 aa).

164–171 (GGAGVGKT) lines the ATP pocket.

It belongs to the ATPase alpha/beta chains family. As to quaternary structure, F-type ATPases have 2 components, CF(1) - the catalytic core - and CF(0) - the membrane proton channel. CF(1) has five subunits: alpha(3), beta(3), gamma(1), delta(1), epsilon(1). CF(0) has four main subunits: a(1), b(1), b'(1) and c(9-12).

It localises to the cellular thylakoid membrane. It catalyses the reaction ATP + H2O + 4 H(+)(in) = ADP + phosphate + 5 H(+)(out). Its function is as follows. Produces ATP from ADP in the presence of a proton gradient across the membrane. The catalytic sites are hosted primarily by the beta subunits. In Prochlorococcus marinus (strain NATL1A), this protein is ATP synthase subunit beta.